We begin with the raw amino-acid sequence, 85 residues long: Serine protease inhibitor Cvsi-2 (85 aa).

The N-terminal stretch at 1–18 is a signal peptide; it reads MKVAVVVALLCFVCYTAA.

In terms of processing, contains 6 disulfide bonds. As to expression, detected in hemolymph (at protein level). Within the digestive gland expression is limited to the basophil cells of the digestive diverticula.

It is found in the secreted. Slow-binding inhibitor of serine proteases. The inhibitor rapidly binds to the protease forming a weak enzyme-inhibitor complex, and this is followed by a slow isomerization forming a tight-binding enzyme-inhibitor complex. Active against subtilisin A with a dissociation constant of 0.18 nM. Active against perkinsin. Not active against thermolysin, papain or pepsin. The polypeptide is Serine protease inhibitor Cvsi-2 (Crassostrea virginica (Eastern oyster)).